Here is a 1254-residue protein sequence, read N- to C-terminus: SUN domain-containing ossification factor (1254 aa).

The signal sequence occupies residues 1 to 29 (MKKHRRALALVSCLFLCSLVWLPSWRVCC). Disordered regions lie at residues 58–88 (KKDEREGPINAESLGKSGSNLPISPKEHKLK), 118–270 (EESS…DIPT), and 282–304 (EKEKSQSMHASSNGGSHATKKVQ). Low complexity predominate over residues 130-145 (VENISSSSTSEITPIS). The segment covering 165 to 175 (EQSETDCDVGE) has biased composition (acidic residues). N-linked (GlcNAc...) asparagine glycans are attached at residues asparagine 202 and asparagine 236. Basic and acidic residues predominate over residues 241–253 (LKNESSDYTKPGD). Residues 284–453 (EKSQSMHASS…SLIRVFGTSM (170 aa)) enclose the SUN domain. Over residues 288–297 (SMHASSNGGS) the composition is skewed to polar residues. An N-linked (GlcNAc...) asparagine glycan is attached at asparagine 524. 3 disordered regions span residues 530–553 (NATATAAPKMPESTPVSTPVPSPE), 583–605 (EEEEEASPSTVTLLGSGEQEDES), and 759–788 (HIPSPVIPQESSVEIDNETEQKSESFSSIE). Residues 540–553 (PESTPVSTPVPSPE) are compositionally biased toward low complexity. Positions 909–1009 (NQKESVFMRL…VAELKREVSD (101 aa)) form a coiled coil. N-linked (GlcNAc...) asparagine glycans are attached at residues asparagine 928 and asparagine 955. Residues 1011–1031 (QSYLVISLVLCVVLGLMLCMQ) form a helical membrane-spanning segment. A Phosphoserine modification is found at serine 1081. Residues 1152–1172 (EVYHSSYKGPPSEGSSETSSQ) are disordered. Over residues 1163 to 1172 (SEGSSETSSQ) the composition is skewed to low complexity.

Post-translationally, O-glycosylated. O-mannosylated by POMT1 and POMT2 and elongated by POMGNT1. In terms of processing, N-glycosylated. As to expression, highly expressed in pancreas and testis and to a lower extent in prostate, ovary, heart, thymus, small intestine and spleen.

The protein localises to the rough endoplasmic reticulum membrane. Functionally, required for bone modeling during late embryogenesis. Regulates type I collagen synthesis in osteoblasts during their postnatal maturation. This is SUN domain-containing ossification factor (SUCO) from Homo sapiens (Human).